The chain runs to 180 residues: ATP-dependent protease subunit HslV (180 aa).

Residue Thr-6 is part of the active site. Na(+) is bound by residues Gly-162, Cys-165, and Thr-168.

It belongs to the peptidase T1B family. HslV subfamily. As to quaternary structure, a double ring-shaped homohexamer of HslV is capped on each side by a ring-shaped HslU homohexamer. The assembly of the HslU/HslV complex is dependent on binding of ATP.

Its subcellular location is the cytoplasm. It catalyses the reaction ATP-dependent cleavage of peptide bonds with broad specificity.. With respect to regulation, allosterically activated by HslU binding. Protease subunit of a proteasome-like degradation complex believed to be a general protein degrading machinery. The chain is ATP-dependent protease subunit HslV from Oleidesulfovibrio alaskensis (strain ATCC BAA-1058 / DSM 17464 / G20) (Desulfovibrio alaskensis).